The chain runs to 254 residues: Glycerol operon regulatory protein (254 aa).

Residues 5–67 (IQSLERAAAM…PASGRYQLGA (63 aa)) form the HTH iclR-type domain. A DNA-binding region (H-T-H motif) is located at residues 27–46 (LSDIASTLGLAKGTAHGILR). The region spanning 82-251 (LRARALVWTD…AAAVSRDLGA (170 aa)) is the IclR-ED domain.

Functionally, may be an activator protein for the gylABX operon. In Streptomyces griseus, this protein is Glycerol operon regulatory protein (gylR).